A 498-amino-acid chain; its full sequence is Probable cytosol aminopeptidase (498 aa).

Lys264 and Asp269 together coordinate Mn(2+). Lys276 is an active-site residue. Positions 287, 346, and 348 each coordinate Mn(2+). Arg350 is an active-site residue.

Belongs to the peptidase M17 family. It depends on Mn(2+) as a cofactor.

It localises to the cytoplasm. The enzyme catalyses Release of an N-terminal amino acid, Xaa-|-Yaa-, in which Xaa is preferably Leu, but may be other amino acids including Pro although not Arg or Lys, and Yaa may be Pro. Amino acid amides and methyl esters are also readily hydrolyzed, but rates on arylamides are exceedingly low.. The catalysed reaction is Release of an N-terminal amino acid, preferentially leucine, but not glutamic or aspartic acids.. Presumably involved in the processing and regular turnover of intracellular proteins. Catalyzes the removal of unsubstituted N-terminal amino acids from various peptides. This is Probable cytosol aminopeptidase from Rhizobium rhizogenes (strain K84 / ATCC BAA-868) (Agrobacterium radiobacter).